Consider the following 247-residue polypeptide: GTP cyclohydrolase 1 type 2 homolog (247 aa).

Residues His63, His64, Asp101, His215, and Glu219 each coordinate a divalent metal cation.

The protein belongs to the GTP cyclohydrolase I type 2/NIF3 family. Homohexamer.

This Buchnera aphidicola subsp. Schizaphis graminum (strain Sg) protein is GTP cyclohydrolase 1 type 2 homolog.